The sequence spans 437 residues: Repulsive guidance molecule B (437 aa).

The N-terminal stretch at 1-45 is a signal peptide; that stretch reads MGLRAAPSSAAAAAAEVEQRRSPGLCPPPLELLLLLLFSLGLLHA. An N-linked (GlcNAc...) asparagine glycan is attached at Asn120. A compositionally biased stretch (polar residues) spans 121–133; it reads CSKDGPTSSTNPE. The disordered stretch occupies residues 121-153; it reads CSKDGPTSSTNPEVTHDPCNYHSHAGAREHRRG. 2 cysteine pairs are disulfide-bonded: Cys139-Cys226 and Cys163-Cys312. N-linked (GlcNAc...) asparagine glycosylation occurs at Asn383. Residue Asn413 is the site of GPI-anchor amidated asparagine attachment. The propeptide at 414-437 is removed in mature form; the sequence is GTPRGGSDLSVSLGLTCLILIVFL.

Belongs to the repulsive guidance molecule (RGM) family. In terms of assembly, homooligomer. Interacts with DRGX. Interacts with BMP2 and BMP4. Interacts with the BMP type I receptors ACVR1, BMPR1A and BMPR1B and with the BMP type II receptor ACVR2B. The functional complex with its receptor NEO1/neogenin appears to be a heterotetramer with a 2:2 stoichiometry, RGM molecules acting as staples that bring two NEO1 receptors together without interacting themselves, this arrangement leads to activation of downstream signaling via RhoA. In terms of processing, GPI-anchored. Autocatalytically cleaved at low pH; the two chains remain linked via two disulfide bonds.

Its subcellular location is the cell membrane. The protein localises to the membrane raft. Its function is as follows. Member of the repulsive guidance molecule (RGM) family that contributes to the patterning of the developing nervous system. Acts as a bone morphogenetic protein (BMP) coreceptor that potentiates BMP signaling. Promotes neuronal adhesion. May inhibit neurite outgrowth. The chain is Repulsive guidance molecule B from Homo sapiens (Human).